The chain runs to 316 residues: Cytochrome c biogenesis protein CcsA (316 aa).

The next 8 membrane-spanning stretches (helical) occupy residues 9-29 (IFVN…LINL), 39-61 (FSKN…RYLQ), 70-90 (LYES…ILEV), 94-114 (IGLS…FATL), 143-163 (LISY…LSLF), 224-244 (TISL…VWAN), 257-271 (ETWA…AIYL), and 289-309 (SMGF…GVGL).

It belongs to the CcmF/CycK/Ccl1/NrfE/CcsA family. In terms of assembly, may interact with Ccs1.

It localises to the plastid. The protein resides in the chloroplast thylakoid membrane. In terms of biological role, required during biogenesis of c-type cytochromes (cytochrome c6 and cytochrome f) at the step of heme attachment. The protein is Cytochrome c biogenesis protein CcsA of Adiantum capillus-veneris (Maidenhair fern).